We begin with the raw amino-acid sequence, 182 residues long: A-type ATP synthase subunit E (182 aa).

This sequence belongs to the V-ATPase E subunit family. Has multiple subunits with at least A(3), B(3), C, D, E, F, H, I and proteolipid K(x).

It localises to the cell membrane. Functionally, component of the A-type ATP synthase that produces ATP from ADP in the presence of a proton gradient across the membrane. In Picrophilus torridus (strain ATCC 700027 / DSM 9790 / JCM 10055 / NBRC 100828 / KAW 2/3), this protein is A-type ATP synthase subunit E.